We begin with the raw amino-acid sequence, 268 residues long: Ribosomal RNA small subunit methyltransferase A (268 aa).

S-adenosyl-L-methionine is bound by residues asparagine 18, leucine 20, glycine 45, glutamate 66, aspartate 91, and asparagine 112.

It belongs to the class I-like SAM-binding methyltransferase superfamily. rRNA adenine N(6)-methyltransferase family. RsmA subfamily.

The protein localises to the cytoplasm. The enzyme catalyses adenosine(1518)/adenosine(1519) in 16S rRNA + 4 S-adenosyl-L-methionine = N(6)-dimethyladenosine(1518)/N(6)-dimethyladenosine(1519) in 16S rRNA + 4 S-adenosyl-L-homocysteine + 4 H(+). Specifically dimethylates two adjacent adenosines (A1518 and A1519) in the loop of a conserved hairpin near the 3'-end of 16S rRNA in the 30S particle. May play a critical role in biogenesis of 30S subunits. The protein is Ribosomal RNA small subunit methyltransferase A of Shewanella frigidimarina (strain NCIMB 400).